We begin with the raw amino-acid sequence, 427 residues long: Imidazolonepropionase (427 aa).

His-78 and His-80 together coordinate Fe(3+). 2 residues coordinate Zn(2+): His-78 and His-80. 4-imidazolone-5-propanoate is bound by residues Arg-87, Tyr-150, and His-183. Tyr-150 contributes to the N-formimidoyl-L-glutamate binding site. His-255 serves as a coordination point for Fe(3+). His-255 provides a ligand contact to Zn(2+). 4-imidazolone-5-propanoate is bound at residue Glu-258. Asp-330 is a Fe(3+) binding site. Asp-330 contacts Zn(2+). N-formimidoyl-L-glutamate is bound by residues Asn-332 and Gly-334. Residue Thr-335 participates in 4-imidazolone-5-propanoate binding.

Belongs to the metallo-dependent hydrolases superfamily. HutI family. The cofactor is Zn(2+). Fe(3+) serves as cofactor.

It is found in the cytoplasm. It carries out the reaction 4-imidazolone-5-propanoate + H2O = N-formimidoyl-L-glutamate. The protein operates within amino-acid degradation; L-histidine degradation into L-glutamate; N-formimidoyl-L-glutamate from L-histidine: step 3/3. Its function is as follows. Catalyzes the hydrolytic cleavage of the carbon-nitrogen bond in imidazolone-5-propanoate to yield N-formimidoyl-L-glutamate. It is the third step in the universal histidine degradation pathway. The chain is Imidazolonepropionase from Herpetosiphon aurantiacus (strain ATCC 23779 / DSM 785 / 114-95).